The chain runs to 101 residues: Large ribosomal subunit protein uL24 (101 aa).

The protein belongs to the universal ribosomal protein uL24 family. In terms of assembly, part of the 50S ribosomal subunit.

One of two assembly initiator proteins, it binds directly to the 5'-end of the 23S rRNA, where it nucleates assembly of the 50S subunit. In terms of biological role, one of the proteins that surrounds the polypeptide exit tunnel on the outside of the subunit. The sequence is that of Large ribosomal subunit protein uL24 from Dinoroseobacter shibae (strain DSM 16493 / NCIMB 14021 / DFL 12).